Here is a 367-residue protein sequence, read N- to C-terminus: Selenoprotein Pa (367 aa).

The first 19 residues, 1-19 (MWKALSLTLALCLLVGCSA), serve as a signal peptide directing secretion. Residue Sec-59 is a non-standard amino acid, selenocysteine. Residue Asn-109 is glycosylated (N-linked (GlcNAc...) asparagine). Residues 191–220 (EVNKPVEEEPRQDHGHHEHGHHEHQGEAER) show a composition bias toward basic and acidic residues. The disordered stretch occupies residues 191 to 241 (EVNKPVEEEPRQDHGHHEHGHHEHQGEAERHRHGHHHPHHHHHHHRGQQQV). Residues 221–237 (HRHGHHHPHHHHHHHRG) show a composition bias toward basic residues. 16 non-standard amino acids (selenocysteine) are found at residues Sec-267, Sec-273, Sec-279, Sec-290, Sec-292, Sec-294, Sec-310, Sec-320, Sec-322, Sec-336, Sec-338, Sec-346, Sec-353, Sec-355, Sec-362, and Sec-364. Positions 309–367 (LUHCDEPLPASUPUQGLKEQDNHIKETUQURPAPPAEUELSQPTUVUPAGDATUGURKK) are disordered. The span at 326-336 (KEQDNHIKETU) shows a compositional bias: basic and acidic residues.

The protein belongs to the selenoprotein P family.

It is found in the secreted. In terms of biological role, might be responsible for some of the extracellular antioxidant defense properties of selenium or might be involved in the transport of selenium. This chain is Selenoprotein Pa (sepp1a), found in Danio rerio (Zebrafish).